Consider the following 524-residue polypeptide: Coronin-2A (524 aa).

WD repeat units lie at residues 80–120, 130–170, 178–217, 220–263, and 269–308; these read GHRG…LTRN, GHAR…SVIA, CHQDVILSMSFNTNGSLLATTCKDRKIRIVDPRLGIVLQE, YKGH…VPLT, and GSSGVLFPFFDSDTSMLYIVGKGDGNIRYYEVSMEKPHLT. The tract at residues 403–436 is disordered; the sequence is LLDSQTLPPERPLSNSMVQVSPQPLEPMKQPAED. Over residues 404–424 the composition is skewed to polar residues; sequence LDSQTLPPERPLSNSMVQVSP. A coiled-coil region spans residues 484–523; it reads QMFYRQQEEIRRLRELLIQREVQTKQLELEIKNLRMALGQ.

The protein belongs to the WD repeat coronin family. In terms of assembly, binds actin. Component of the N-Cor repressor complex, at least composed of NCOR1, NCOR2, HDAC3, TBL1X, TBL1R, CORO2A and GPS2.

In Mus musculus (Mouse), this protein is Coronin-2A (Coro2a).